A 238-amino-acid polypeptide reads, in one-letter code: uncharacterized protein (238 aa).

Belongs to the chlamydial CPn_0658/CT_538/TC_0825 family.

This is an uncharacterized protein from Chlamydia muridarum (strain MoPn / Nigg).